The chain runs to 122 residues: MQDNSSHSRESASAGDDPLGIDKLTVDYDYLLYKIRDYVQSIQLDTTELCKKQNEVMVNGIIENTIDKNIAKFKELLEKCDTLENHYEMLNQLAIITDTFKERIAEAVNNYNSLKKGASKSK.

The segment covering 1–10 (MQDNSSHSRE) has biased composition (basic and acidic residues). Residues 1–21 (MQDNSSHSRESASAGDDPLGI) form a disordered region. Residues 63-95 (ENTIDKNIAKFKELLEKCDTLENHYEMLNQLAI) adopt a coiled-coil conformation.

It belongs to the BLOC1S4 family. In terms of assembly, component of the biogenesis of lysosome-related organelles complex-1 (BLOC-1) composed of at least BLI1, BLS1, CNL1, KXD1, SNN1 and VAB2.

Its subcellular location is the cytoplasm. In terms of biological role, component of the biogenesis of lysosome-related organelles complex-1 (BLOC-1), a complex that is involved in endosomal cargo sorting. This chain is Biogenesis of lysosome-related organelles complex 1 subunit CNL1 (CLN1), found in Saccharomyces cerevisiae (strain RM11-1a) (Baker's yeast).